Reading from the N-terminus, the 64-residue chain is Protein translocase subunit SecE (64 aa).

Residues 35 to 55 form a helical membrane-spanning segment; the sequence is LVVLGTVAFITVFFAVVDYGI.

It belongs to the SecE/SEC61-gamma family. In terms of assembly, component of the Sec protein translocase complex. Heterotrimer consisting of SecY, SecE and SecG subunits. The heterotrimers can form oligomers, although 1 heterotrimer is thought to be able to translocate proteins. Interacts with the ribosome. Interacts with SecDF, and other proteins may be involved. Interacts with SecA.

The protein localises to the cell membrane. Its function is as follows. Essential subunit of the Sec protein translocation channel SecYEG. Clamps together the 2 halves of SecY. May contact the channel plug during translocation. This chain is Protein translocase subunit SecE, found in Halalkalibacterium halodurans (strain ATCC BAA-125 / DSM 18197 / FERM 7344 / JCM 9153 / C-125) (Bacillus halodurans).